We begin with the raw amino-acid sequence, 110 residues long: Large ribosomal subunit protein uL22 (110 aa).

The protein belongs to the universal ribosomal protein uL22 family. In terms of assembly, part of the 50S ribosomal subunit.

Its function is as follows. This protein binds specifically to 23S rRNA; its binding is stimulated by other ribosomal proteins, e.g. L4, L17, and L20. It is important during the early stages of 50S assembly. It makes multiple contacts with different domains of the 23S rRNA in the assembled 50S subunit and ribosome. Functionally, the globular domain of the protein is located near the polypeptide exit tunnel on the outside of the subunit, while an extended beta-hairpin is found that lines the wall of the exit tunnel in the center of the 70S ribosome. The chain is Large ribosomal subunit protein uL22 from Oleidesulfovibrio alaskensis (strain ATCC BAA-1058 / DSM 17464 / G20) (Desulfovibrio alaskensis).